A 272-amino-acid chain; its full sequence is Acyl-[acyl-carrier-protein]--UDP-N-acetylglucosamine O-acyltransferase (272 aa).

The protein belongs to the transferase hexapeptide repeat family. LpxA subfamily. In terms of assembly, homotrimer.

It is found in the cytoplasm. The catalysed reaction is a (3R)-hydroxyacyl-[ACP] + UDP-N-acetyl-alpha-D-glucosamine = a UDP-3-O-[(3R)-3-hydroxyacyl]-N-acetyl-alpha-D-glucosamine + holo-[ACP]. The protein operates within glycolipid biosynthesis; lipid IV(A) biosynthesis; lipid IV(A) from (3R)-3-hydroxytetradecanoyl-[acyl-carrier-protein] and UDP-N-acetyl-alpha-D-glucosamine: step 1/6. Functionally, involved in the biosynthesis of lipid A, a phosphorylated glycolipid that anchors the lipopolysaccharide to the outer membrane of the cell. The polypeptide is Acyl-[acyl-carrier-protein]--UDP-N-acetylglucosamine O-acyltransferase (Rhizobium leguminosarum bv. trifolii (strain WSM2304)).